A 277-amino-acid polypeptide reads, in one-letter code: Phosphatidylglycerol--prolipoprotein diacylglyceryl transferase (277 aa).

A run of 4 helical transmembrane segments spans residues 18–38, 51–71, 89–109, and 116–136; these read ISVK…LLLA, IIVD…RIYY, IWHG…TAII, and ISFW…QAIG. Residue arginine 137 coordinates a 1,2-diacyl-sn-glycero-3-phospho-(1'-sn-glycerol). A run of 3 helical transmembrane segments spans residues 177–197, 205–225, and 235–255; these read QPTF…LLII, GELF…IEGM, and FRVS…IIIY.

This sequence belongs to the Lgt family.

The protein localises to the cell membrane. The enzyme catalyses L-cysteinyl-[prolipoprotein] + a 1,2-diacyl-sn-glycero-3-phospho-(1'-sn-glycerol) = an S-1,2-diacyl-sn-glyceryl-L-cysteinyl-[prolipoprotein] + sn-glycerol 1-phosphate + H(+). The protein operates within protein modification; lipoprotein biosynthesis (diacylglyceryl transfer). Functionally, catalyzes the transfer of the diacylglyceryl group from phosphatidylglycerol to the sulfhydryl group of the N-terminal cysteine of a prolipoprotein, the first step in the formation of mature lipoproteins. In Listeria monocytogenes serotype 4a (strain HCC23), this protein is Phosphatidylglycerol--prolipoprotein diacylglyceryl transferase.